A 77-amino-acid polypeptide reads, in one-letter code: Delta/omega-plectoxin-Pt1a (77 aa).

Residues 1 to 20 (MKHLIVAVVLLSALAICTSA) form the signal peptide. A propeptide spanning residues 21–34 (EEEQVNVPFRPEER) is cleaved from the precursor. 5 cysteine pairs are disulfide-bonded: cysteine 38-cysteine 51, cysteine 45-cysteine 57, cysteine 50-cysteine 67, cysteine 54-cysteine 74, and cysteine 59-cysteine 65. Serine 73 carries O-palmitoyl serine lipidation. Cysteine 74 is subject to Cysteine amide.

The protein belongs to the neurotoxin 02 (plectoxin) family. 01 (Tx3) subfamily. As to expression, expressed by the venom gland.

It localises to the secreted. Its function is as follows. Excitatory toxin that acts on both calcium and sodium (Nav) channels. It preferentially blocks a subset of calcium channels that is apparently not required for neurotransmitter release, it decreases threshold for sodium channel activation and it slows sodium channel inactivation. As it enhances synaptic transmission by prolonging presynaptic release of neurotransmitter, its effects on sodium and calcium channels may act synergistically to sustain the terminal excitability. This is Delta/omega-plectoxin-Pt1a from Plectreurys tristis (Spider).